Here is a 937-residue protein sequence, read N- to C-terminus: Isoleucine--tRNA ligase (937 aa).

The 'HIGH' region signature appears at 58-68 (PYANGHIHLGT). Glu566 contacts L-isoleucyl-5'-AMP. The short motif at 607–611 (KMSKS) is the 'KMSKS' region element. Residue Lys610 participates in ATP binding. The Zn(2+) site is built by Cys906, Cys909, Cys925, and Cys928.

Belongs to the class-I aminoacyl-tRNA synthetase family. IleS type 1 subfamily. As to quaternary structure, monomer. Zn(2+) serves as cofactor.

The protein localises to the cytoplasm. It catalyses the reaction tRNA(Ile) + L-isoleucine + ATP = L-isoleucyl-tRNA(Ile) + AMP + diphosphate. In terms of biological role, catalyzes the attachment of isoleucine to tRNA(Ile). As IleRS can inadvertently accommodate and process structurally similar amino acids such as valine, to avoid such errors it has two additional distinct tRNA(Ile)-dependent editing activities. One activity is designated as 'pretransfer' editing and involves the hydrolysis of activated Val-AMP. The other activity is designated 'posttransfer' editing and involves deacylation of mischarged Val-tRNA(Ile). In Lawsonia intracellularis (strain PHE/MN1-00), this protein is Isoleucine--tRNA ligase.